We begin with the raw amino-acid sequence, 135 residues long: Mediator of RNA polymerase II transcription subunit 10 (135 aa).

It belongs to the Mediator complex subunit 10 family. In terms of assembly, component of the Mediator complex, which is composed of MED1, MED4, MED6, MED7, MED8, MED9, MED10, MED11, MED12, MED13, MED13L, MED14, MED15, MED16, MED17, MED18, MED19, MED20, MED21, MED22, MED23, MED24, MED25, MED26, MED27, MED29, MED30, MED31, CCNC, CDK8 and CDC2L6/CDK11. The MED12, MED13, CCNC and CDK8 subunits form a distinct module termed the CDK8 module. Mediator containing the CDK8 module is less active than Mediator lacking this module in supporting transcriptional activation. Individual preparations of the Mediator complex lacking one or more distinct subunits have been variously termed ARC, CRSP, DRIP, PC2, SMCC and TRAP.

The protein resides in the nucleus. Functionally, component of the Mediator complex, a coactivator involved in the regulated transcription of nearly all RNA polymerase II-dependent genes. Mediator functions as a bridge to convey information from gene-specific regulatory proteins to the basal RNA polymerase II transcription machinery. Mediator is recruited to promoters by direct interactions with regulatory proteins and serves as a scaffold for the assembly of a functional preinitiation complex with RNA polymerase II and the general transcription factors. The polypeptide is Mediator of RNA polymerase II transcription subunit 10 (Med10) (Mus musculus (Mouse)).